We begin with the raw amino-acid sequence, 440 residues long: 2-methylisoborneol synthase (440 aa).

Residues 1–116 are disordered; the sequence is MPDSGPLGPH…SPAPAEPAAG (116 aa). The segment covering 17-27 has biased composition (low complexity); that stretch reads TPATTVPDAPA. The span at 48 to 58 shows a compositional bias: pro residues; the sequence is PPVPIPSPSPP. Low complexity predominate over residues 59-75; the sequence is SGSASAAADTPDATTVG. Residues 102–111 show a composition bias toward pro residues; the sequence is PSLPGSPAPA. Positions 197, 198, 202, 345, 349, and 353 each coordinate Mg(2+).

This sequence belongs to the terpene synthase family. 2-methylisoborneol synthase subfamily. The cofactor is Mg(2+).

The catalysed reaction is (E)-2-methylgeranyl diphosphate + H2O = 2-methylisoborneol + diphosphate. In terms of biological role, catalyzes the cyclization of 2-methylgeranyl diphosphate (2-MeGPP) to 2-methylisoborneol (2-MIB), which likely involves the intermediacy of 2-methyllinalyl diphosphate. This chain is 2-methylisoborneol synthase, found in Streptomyces ambofaciens (strain ATCC 23877 / 3486 / DSM 40053 / JCM 4204 / NBRC 12836 / NRRL B-2516).